The sequence spans 112 residues: FSPDCTWTIRNSGISQPVAIVSIEEVQFGYCRGYIKVFDGSGAQIFTREGCHENHSSNAFLEIAFQESQNVTIQVSLQNNQSYARVGYGILEDDLESASLLPAWNVAIENKT.

Component of the acid-insoluble and acid-soluble organic matrix of the aragonitic skeleton (at protein level).

The protein resides in the secreted. The polypeptide is MAM and fibronectin type III domain-containing protein 2 (Acropora millepora (Staghorn coral)).